Consider the following 341-residue polypeptide: L-threonine 3-dehydrogenase (341 aa).

Cysteine 38 serves as a coordination point for Zn(2+). Active-site charge relay system residues include threonine 40 and histidine 43. Positions 63, 64, 93, 96, 99, and 107 each coordinate Zn(2+). NAD(+) contacts are provided by residues isoleucine 175, aspartate 195, arginine 200, 262–264 (LGI), and 286–287 (IY).

It belongs to the zinc-containing alcohol dehydrogenase family. In terms of assembly, homotetramer. The cofactor is Zn(2+).

The protein resides in the cytoplasm. The catalysed reaction is L-threonine + NAD(+) = (2S)-2-amino-3-oxobutanoate + NADH + H(+). The protein operates within amino-acid degradation; L-threonine degradation via oxydo-reductase pathway; glycine from L-threonine: step 1/2. Functionally, catalyzes the NAD(+)-dependent oxidation of L-threonine to 2-amino-3-ketobutyrate. This chain is L-threonine 3-dehydrogenase, found in Shigella sonnei (strain Ss046).